The sequence spans 157 residues: Probable chemoreceptor glutamine deamidase CheD (157 aa).

The protein belongs to the CheD family.

The catalysed reaction is L-glutaminyl-[protein] + H2O = L-glutamyl-[protein] + NH4(+). In terms of biological role, probably deamidates glutamine residues to glutamate on methyl-accepting chemotaxis receptors (MCPs), playing an important role in chemotaxis. The protein is Probable chemoreceptor glutamine deamidase CheD of Archaeoglobus fulgidus (strain ATCC 49558 / DSM 4304 / JCM 9628 / NBRC 100126 / VC-16).